The sequence spans 212 residues: MNQSLLAPYGNAIERVNAALTALRQGKGVLVVDDEDRENEGDLIYSAETLTNEQMALLIRECSGIVCLCLTDERIEQLQLPPMVSDNNSQYGTAFTVSIEAKQGVTTGVSAADRVTTIKTAIADNAKPDDLARPGHVYPLRARPGGVLERRGHTEGTVDLMKLAGLKPYGVLCEVTLVDGTMARLPEIIEFGQQHDMPVLTIEDIVAYRTTQ.

Residues 37–38 (RE), D42, 150–154 (RRGHT), and E174 each bind D-ribulose 5-phosphate. E38 is a binding site for Mg(2+). Mg(2+) is bound at residue H153.

The protein belongs to the DHBP synthase family. In terms of assembly, homodimer. Requires Mg(2+) as cofactor. The cofactor is Mn(2+).

It carries out the reaction D-ribulose 5-phosphate = (2S)-2-hydroxy-3-oxobutyl phosphate + formate + H(+). The protein operates within cofactor biosynthesis; riboflavin biosynthesis; 2-hydroxy-3-oxobutyl phosphate from D-ribulose 5-phosphate: step 1/1. Catalyzes the conversion of D-ribulose 5-phosphate to formate and 3,4-dihydroxy-2-butanone 4-phosphate. This Shewanella halifaxensis (strain HAW-EB4) protein is 3,4-dihydroxy-2-butanone 4-phosphate synthase.